The chain runs to 255 residues: Proteasome subunit alpha type-3 (255 aa).

Ser2 is modified (N-acetylserine). An N6-acetyllysine mark is found at Lys57, Lys206, and Lys230. Phosphoserine occurs at positions 243 and 250.

This sequence belongs to the peptidase T1A family. The 26S proteasome consists of a 20S proteasome core and two 19S regulatory subunits. The 20S proteasome core is a barrel-shaped complex made of 28 subunits that are arranged in four stacked rings. The two outer rings are each formed by seven alpha subunits, and the two inner rings are formed by seven beta subunits. The proteolytic activity is exerted by three beta-subunits PSMB5, PSMB6 and PSMB7. Interacts with AURKB. Interacts with CDKN1A. Interacts with MDM2 and RB1. Interacts with the C-terminus of TBXA2R isoform 2. Interacts with DNAJB2. In terms of tissue distribution, detected in liver (at protein level).

The protein resides in the cytoplasm. The protein localises to the nucleus. Its function is as follows. Component of the 20S core proteasome complex involved in the proteolytic degradation of most intracellular proteins. This complex plays numerous essential roles within the cell by associating with different regulatory particles. Associated with two 19S regulatory particles, forms the 26S proteasome and thus participates in the ATP-dependent degradation of ubiquitinated proteins. The 26S proteasome plays a key role in the maintenance of protein homeostasis by removing misfolded or damaged proteins that could impair cellular functions, and by removing proteins whose functions are no longer required. Associated with the PA200 or PA28, the 20S proteasome mediates ubiquitin-independent protein degradation. This type of proteolysis is required in several pathways including spermatogenesis (20S-PA200 complex) or generation of a subset of MHC class I-presented antigenic peptides (20S-PA28 complex). Binds to the C-terminus of CDKN1A and thereby mediates its degradation. Negatively regulates the membrane trafficking of the cell-surface thromboxane A2 receptor (TBXA2R) isoform 2. This chain is Proteasome subunit alpha type-3 (Psma3), found in Mus musculus (Mouse).